The chain runs to 481 residues: MVVRTQNSESKIKEFFEFCKENEVEFVDFRFSDIKGTWNHIAYSFGALTHDMFKEGIPFDASSFKGWQGIEHSDMILTPDLVRYFIDPFSADVSAVVFCDVYDVYKNQPYEKCPRSIAKKALKHLRDLGLGDVAYFGAENEFFIFDSIKIKDASNSQYYEVDSEEGEWNRDKSFENGVNFGHRPGKQGGYMPVPPTDTMMDIRTEIVKVLNQVGLETFVVHHEVAQAQGEVGVKFGDLVEAADNVQKLKYVVKMVAHLNGKTATFMPKPLYGDNGSGMHTHVSIWKNNENLFGGETYKGLSEFALYFLGGVLRHARGLAAFTNASTNSYKRLIPGYEAPSILTYSASNRSASVRIPYGISKNSARFEFRFPDSSSNPYLAFGAILMAGIDGIKNKMDPGEAMDINLFKLTLDEIREKGIKQMPHTLRRSLEEMLADKQYLKEGQVFSEEFIQAYQSLKFHSEVFPWESKPHPFEFITTYSC.

The region spanning 22 to 106 (NEVEFVDFRF…VFCDVYDVYK (85 aa)) is the GS beta-grasp domain. In terms of domain architecture, GS catalytic spans 114 to 481 (PRSIAKKALK…PFEFITTYSC (368 aa)). Residues Glu139, Glu141, Glu223, and Glu230 each contribute to the Mg(2+) site. L-glutamate contacts are provided by residues 274 to 275 (NG) and Gly275. A Mg(2+)-binding site is contributed by His279. ATP-binding positions include 281-283 (HVS) and Ser283. Positions 331, 337, and 349 each coordinate L-glutamate. ATP contacts are provided by Arg349 and Arg354. Glu367 serves as a coordination point for Mg(2+). L-glutamate is bound at residue Arg369.

This sequence belongs to the glutamine synthetase family. In terms of assembly, oligomer of 12 subunits arranged in the form of two hexameric ring. Mg(2+) is required as a cofactor.

Its subcellular location is the cytoplasm. It catalyses the reaction L-glutamate + NH4(+) + ATP = L-glutamine + ADP + phosphate + H(+). Its activity is regulated as follows. The activity of this enzyme could be controlled by adenylation under conditions of abundant glutamine. Its function is as follows. Catalyzes the ATP-dependent biosynthesis of glutamine from glutamate and ammonia. This is Glutamine synthetase from Helicobacter pylori (strain J99 / ATCC 700824) (Campylobacter pylori J99).